Here is an 84-residue protein sequence, read N- to C-terminus: Delta-stichotoxin-Sgt3a (84 aa).

An N-terminal signal peptide occupies residues 1 to 19; that stretch reads MAYLKIVLVALMLVVAVSA. The propeptide occupies 20–33; it reads MRLSDQEDQDISVA. 3 disulfide bridges follow: cysteine 38-cysteine 78, cysteine 40-cysteine 68, and cysteine 61-cysteine 79. A propeptide is located at residue glycine 84.

It belongs to the sea anemone sodium channel inhibitory toxin family. Type II subfamily.

The protein localises to the secreted. It localises to the nematocyst. In terms of biological role, binds specifically to voltage-gated sodium channels (Nav), thereby delaying their inactivation during signal transduction. This Stichodactyla gigantea (Giant carpet anemone) protein is Delta-stichotoxin-Sgt3a.